We begin with the raw amino-acid sequence, 779 residues long: Endonuclease MutS2 (779 aa).

An ATP-binding site is contributed by 328-335 (GPNTGGKT). One can recognise a Smr domain in the interval 704–779 (LDLRGKRYEE…GSGATIVTLG (76 aa)).

This sequence belongs to the DNA mismatch repair MutS family. MutS2 subfamily. In terms of assembly, homodimer. Binds to stalled ribosomes, contacting rRNA.

In terms of biological role, endonuclease that is involved in the suppression of homologous recombination and thus may have a key role in the control of bacterial genetic diversity. Acts as a ribosome collision sensor, splitting the ribosome into its 2 subunits. Detects stalled/collided 70S ribosomes which it binds and splits by an ATP-hydrolysis driven conformational change. Acts upstream of the ribosome quality control system (RQC), a ribosome-associated complex that mediates the extraction of incompletely synthesized nascent chains from stalled ribosomes and their subsequent degradation. Probably generates substrates for RQC. This Streptococcus pyogenes serotype M5 (strain Manfredo) protein is Endonuclease MutS2.